The primary structure comprises 794 residues: Mitochondrial intermediate peptidase (794 aa).

The N-terminal 39 residues, Met-1–Leu-39, are a transit peptide targeting the mitochondrion. His-581 is a Zn(2+) binding site. The active site involves Glu-582. His-585 and His-588 together coordinate Zn(2+).

It belongs to the peptidase M3 family. Requires Zn(2+) as cofactor.

It localises to the mitochondrion matrix. The catalysed reaction is Release of an N-terminal octapeptide as second stage of processing of some proteins imported into the mitochondrion.. Its function is as follows. Cleaves proteins, imported into the mitochondrion, to their mature size. While most mitochondrial precursor proteins are processed to the mature form in one step by mitochondrial processing peptidase (MPP), the sequential cleavage by MIP of an octapeptide after initial processing by MPP is a required step for a subgroup of nuclear-encoded precursor proteins destined for the matrix or the inner membrane. The protein is Mitochondrial intermediate peptidase (OCT1) of Debaryomyces hansenii (strain ATCC 36239 / CBS 767 / BCRC 21394 / JCM 1990 / NBRC 0083 / IGC 2968) (Yeast).